A 115-amino-acid chain; its full sequence is DNA repair protein homolog YozK (115 aa).

Positions 12–115 (ILCVDMKSFY…EKCVHTYSID (104 aa)) constitute a UmuC domain. Mg(2+) is bound by residues aspartate 16 and aspartate 115.

Belongs to the DNA polymerase type-Y family. It depends on Mg(2+) as a cofactor.

In Bacillus subtilis (strain 168), this protein is DNA repair protein homolog YozK (yozK).